A 235-amino-acid chain; its full sequence is Large ribosomal subunit protein bL25 (235 aa).

Positions 201 to 235 (PVAEAKGKGKAAKPAATAKPAAAAAKPAAKPKAKK) are disordered. Low complexity predominate over residues 212 to 228 (AKPAATAKPAAAAAKPA).

This sequence belongs to the bacterial ribosomal protein bL25 family. CTC subfamily. Part of the 50S ribosomal subunit; part of the 5S rRNA/L5/L18/L25 subcomplex. Contacts the 5S rRNA. Binds to the 5S rRNA independently of L5 and L18.

Its function is as follows. This is one of the proteins that binds to the 5S RNA in the ribosome where it forms part of the central protuberance. The polypeptide is Large ribosomal subunit protein bL25 (Verminephrobacter eiseniae (strain EF01-2)).